A 346-amino-acid chain; its full sequence is Phosphoribosylformylglycinamidine cyclo-ligase (346 aa).

This sequence belongs to the AIR synthase family.

It localises to the cytoplasm. It catalyses the reaction 2-formamido-N(1)-(5-O-phospho-beta-D-ribosyl)acetamidine + ATP = 5-amino-1-(5-phospho-beta-D-ribosyl)imidazole + ADP + phosphate + H(+). Its pathway is purine metabolism; IMP biosynthesis via de novo pathway; 5-amino-1-(5-phospho-D-ribosyl)imidazole from N(2)-formyl-N(1)-(5-phospho-D-ribosyl)glycinamide: step 2/2. This Shewanella halifaxensis (strain HAW-EB4) protein is Phosphoribosylformylglycinamidine cyclo-ligase.